We begin with the raw amino-acid sequence, 593 residues long: Corrinoid activation enzyme RamQ (593 aa).

The 2Fe-2S ferredoxin-type domain occupies 1–76; that stretch reads MRVLFPLLEE…GMEIYASREQ (76 aa). [2Fe-2S] cluster contacts are provided by C35, C41, C44, and C60.

It depends on [2Fe-2S] cluster as a cofactor.

Involved in the degradation of the quaternary amines L-proline betaine and L-carnitine. Component of a corrinoid-dependent methyltransferase system that transfers a methyl group from L-proline betaine or L-carnitine to tetrahydrofolate (THF), forming methyl-THF, a key intermediate in the Wood-Ljungdahl acetogenesis pathway. RamQ is not required for the methyl transfer, but it stimulates reduction of reconstituted MtqC from the Co(II) state to the Co(I) state in vitro. It also stimulates the rate of THF methylation. The protein is Corrinoid activation enzyme RamQ of Eubacterium limosum.